The following is a 725-amino-acid chain: NAD(+) hydrolase SARM1 (725 aa).

Residues 1-27 constitute a mitochondrion transit peptide; that stretch reads MVLTILFSAYKLCRFFAMSSPRPGAER. The stretch at 60–100 is one ARM 1 repeat; that stretch reads EVQGALERALPELQQALSALKQAGGGRAVGAGLAEVFQLVE. NAD(+)-binding positions include W103, R110, 149 to 158, and 191 to 194; these read EQILVAENRR and HMFK. ARM repeat units follow at residues 114–153, 155–194, 197–236, 238–281, 282–315, 316–355, and 360–403; these read QGLC…QILV, ENRR…HMFK, EETC…NCAM, GGQA…LATN, KEVE…CLVD, ASDT…AEAV, and KNRN…EEVP. SAM domains follow at residues 413-477 and 483-549; these read WKEA…LKTF and CDRS…MLHS. A phosphoserine mark is found at S549 and S559. A TIR domain is found at 561–704; it reads DVPDVFISYR…KIIRFLQGRS (144 aa). Residues 570–571 and E600 contribute to the NAD(+) site; that span reads RR. E643 is a catalytic residue. A disordered region spans residues 705-725; the sequence is SRDSSAGSDTSLEGAAPMGPT.

The protein belongs to the SARM1 family. As to quaternary structure, homooctamer; forms an octameric ring via SAM domains. Interacts with TICAM1/TRIF and thereby interferes with TICAM1/TRIF function. Interacts with MAPK10/JNK3 and SDC2 (via cytoplasmic domain). Post-translationally, phosphorylation at Ser-549 by JNK kinases (MAPK8, MAPK9 and /or MAPK10) enhance the NAD(+) hydrolase (NADase) activity. Phosphorylation at Ser-549 and subsequent activation takes place in response to oxidative stress conditions and inhibits mitochondrial respiration. Highest expression seen in the spleen and the brain, followed by lung, kidney, liver and other tissues.

It is found in the cytoplasm. Its subcellular location is the cell projection. The protein localises to the axon. The protein resides in the dendrite. It localises to the synapse. It is found in the mitochondrion. The enzyme catalyses NAD(+) + H2O = ADP-D-ribose + nicotinamide + H(+). The catalysed reaction is NAD(+) = cyclic ADP-beta-D-ribose + nicotinamide + H(+). It catalyses the reaction NADP(+) + H2O = ADP-D-ribose 2'-phosphate + nicotinamide + H(+). Its activity is regulated as follows. Autoinhibited: in the inactive state, the enzymatic TIR domain is held apart by the autoinhibiting ARM repeats. NAD(+)-binding to ARM repeats maintains an inactive state by promoting interaction between ARM repeats and the TIR domain, thereby facilitating inhibition of the enzymatic TIR domain. Following activation, possibly by nicotinamide mononucleotide (NMN), auto-inhibitory interactions are released, allowing self-association of the TIR domains and subsequent activation of the NAD(+) hydrolase (NADase) activity. Self-association of TIR domains is facilitated by the octamer of SAM domains. In terms of biological role, NAD(+) hydrolase, which plays a key role in axonal degeneration following injury by regulating NAD(+) metabolism. Acts as a negative regulator of MYD88- and TRIF-dependent toll-like receptor signaling pathway by promoting Wallerian degeneration, an injury-induced form of programmed subcellular death which involves degeneration of an axon distal to the injury site. Wallerian degeneration is triggered by NAD(+) depletion: in response to injury, SARM1 is activated and catalyzes cleavage of NAD(+) into ADP-D-ribose (ADPR), cyclic ADPR (cADPR) and nicotinamide; NAD(+) cleavage promoting cytoskeletal degradation and axon destruction. Also able to hydrolyze NADP(+), but not other NAD(+)-related molecules. Can activate neuronal cell death in response to stress. Regulates dendritic arborization through the MAPK4-JNK pathway. Involved in innate immune response: inhibits both TICAM1/TRIF- and MYD88-dependent activation of JUN/AP-1, TRIF-dependent activation of NF-kappa-B and IRF3, and the phosphorylation of MAPK14/p38. This Sus scrofa (Pig) protein is NAD(+) hydrolase SARM1.